A 612-amino-acid chain; its full sequence is Netrin unc-6 (612 aa).

The signal sequence occupies residues methionine 1–glycine 21. The Laminin N-terminal domain maps to arginine 43–arginine 290. Residues asparagine 114, asparagine 128, and asparagine 268 are each glycosylated (N-linked (GlcNAc...) asparagine). Cysteine 117 and cysteine 149 are disulfide-bonded. Intrachain disulfides connect cysteine 291–cysteine 300, cysteine 293–cysteine 310, cysteine 312–cysteine 321, cysteine 324–cysteine 344, cysteine 347–cysteine 356, cysteine 349–cysteine 374, cysteine 377–cysteine 386, cysteine 389–cysteine 407, cysteine 410–cysteine 422, cysteine 412–cysteine 429, cysteine 431–cysteine 440, cysteine 443–cysteine 457, cysteine 478–cysteine 547, and cysteine 494–cysteine 604. Laminin EGF-like domains are found at residues cysteine 291–alanine 346, cysteine 347–serine 409, and cysteine 410–lysine 459. Asparagine 368 carries N-linked (GlcNAc...) asparagine glycosylation. Residue asparagine 423 is glycosylated (N-linked (GlcNAc...) asparagine). Residues cysteine 478–cysteine 604 form the NTR domain. N-linked (GlcNAc...) asparagine glycosylation occurs at asparagine 564.

As to quaternary structure, binds to unc-5 and unc-40 receptors.

Its subcellular location is the secreted. It is found in the extracellular space. It localises to the extracellular matrix. The protein localises to the basement membrane. Its function is as follows. Component of an extracellular matrix cue that guides dorsoventral migrations on the epidermis. Required for the guidance of pioneer axons and migrating cells along the body wall. In particular, it is required for the guidance of axons from neurons, including SubL neurons and AIY interneurons, into the nerve ring. During gonad morphogenesis, involved in distal tip cell (DTC) migration from the dorsal side of the hermaphrodite body to the midbody to allow for formation of gonad arms. Its association with either unc-40 or unc-5 receptors will lead to axon attraction or repulsion, respectively. Involved in dendritic morphogenesis; may act by association with unc-40 at the tips of growing dendrites for interaction with unc-5 on the apposing branch to induce mutual repulsion. Involved in the positioning of ray 1, the most anterior ray sensilium, in the male tail. Required for the formation of synapses between the AVA interneurons and the PHB sensory neurons. The chain is Netrin unc-6 from Caenorhabditis elegans.